Consider the following 203-residue polypeptide: Ras-like protein family member 10B (203 aa).

The small GTPase-like stretch occupies residues 1 to 203 (MVSTYRVAVL…ALRRNRCAIM (203 aa)). 11–18 (GARGVGKS) contributes to the GTP binding site. The short motif at 33-42 (CVPTTARRLY) is the Effector region element. GTP contacts are provided by residues 59–62 (DFPP) and 128–131 (NKRD). Cysteine 200 carries the post-translational modification Cysteine methyl ester. Cysteine 200 is lipidated: S-geranylgeranyl cysteine. The propeptide at 201–203 (AIM) is removed in mature form.

It belongs to the small GTPase superfamily. Ras family. Interacts with CADPS. As to expression, expressed at high levels in skeletal muscle and, at much lower levels, in heart, brain and pancreas.

It localises to the cell membrane. The catalysed reaction is GTP + H2O = GDP + phosphate + H(+). Its function is as follows. May facilitate the release of atrial natriuretic peptide by cardiomyocytes and hence play a role in the regulation of arterial pressure. This chain is Ras-like protein family member 10B (RASL10B), found in Homo sapiens (Human).